Reading from the N-terminus, the 330-residue chain is Fructose-1,6-bisphosphatase class 1 (330 aa).

Glu-84, Asp-103, Leu-105, and Asp-106 together coordinate Mg(2+). Substrate contacts are provided by residues 106–109, Asn-196, and Lys-262; that span reads DGSS. Glu-268 contacts Mg(2+).

Belongs to the FBPase class 1 family. As to quaternary structure, homotetramer. It depends on Mg(2+) as a cofactor.

It localises to the cytoplasm. It carries out the reaction beta-D-fructose 1,6-bisphosphate + H2O = beta-D-fructose 6-phosphate + phosphate. Its pathway is carbohydrate biosynthesis; gluconeogenesis. The chain is Fructose-1,6-bisphosphatase class 1 from Shewanella baltica (strain OS185).